Consider the following 342-residue polypeptide: Inactive chitinase-like protein 2 (342 aa).

A signal peptide spans 1–19 (MKEIVRALEGYGPPKDKAA). Positions 20 to 60 (EQCGWQAGGALCPGGLCCSQYGWCANTPEYCGSGCQSQCDG) constitute a Chitin-binding type-1 domain. 7 disulfides stabilise this stretch: cysteine 22–cysteine 37, cysteine 31–cysteine 43, cysteine 36–cysteine 80, cysteine 84–cysteine 88, cysteine 122–cysteine 184, cysteine 196–cysteine 204, and cysteine 301–cysteine 333.

Belongs to the glycosyl hydrolase 19 family. Chitinase class I subfamily.

In terms of biological role, inactive chitinase-like protein that does not exhibit hydrolytic activity toward chitin. Binds strongly to chitin and possesses antifungal activity toward the fungal pathogen Altenaria alternata in plate assays. Probably involved in defense against fungal pathogens through a mechanism that only involves carbohydrate binding. The protein is Inactive chitinase-like protein 2 of Hevea brasiliensis (Para rubber tree).